The primary structure comprises 300 residues: Cation-efflux pump FieF (300 aa).

Residues 24 to 44 form a helical membrane-spanning segment; the sequence is LLIKIFAWWYTGSVSILAALV. The Zn(2+) site is built by aspartate 45 and aspartate 49. 2 consecutive transmembrane segments (helical) span residues 82–102 and 114–134; these read AALA…LTGI and AGVG…LVTF. Zn(2+)-binding residues include histidine 153 and aspartate 157. 2 consecutive transmembrane segments (helical) span residues 156–176 and 178–198; these read SDVM…YGWH and ADAL…LRMG.

This sequence belongs to the cation diffusion facilitator (CDF) transporter (TC 2.A.4) family. FieF subfamily. In terms of assembly, homodimer.

The protein resides in the cell inner membrane. The catalysed reaction is Zn(2+)(in) + H(+)(out) = Zn(2+)(out) + H(+)(in). It catalyses the reaction Cd(2+)(in) + H(+)(out) = Cd(2+)(out) + H(+)(in). The enzyme catalyses Fe(2+)(in) + H(+)(out) = Fe(2+)(out) + H(+)(in). Functionally, divalent metal cation transporter which exports Zn(2+), Cd(2+) and possibly Fe(2+). May be involved in zinc and iron detoxification by efflux. In Klebsiella pneumoniae subsp. pneumoniae (strain ATCC 700721 / MGH 78578), this protein is Cation-efflux pump FieF.